The following is a 39-amino-acid chain: Large ribosomal subunit protein bL36 (39 aa).

This sequence belongs to the bacterial ribosomal protein bL36 family.

This is Large ribosomal subunit protein bL36 from Pediococcus pentosaceus (strain ATCC 25745 / CCUG 21536 / LMG 10740 / 183-1w).